The following is a 488-amino-acid chain: MTQDVEMKDNNTPSQSIISSSTSTMQNLKEIAALIDTGSYTKEVRRIARAVRLTIGLRQKLTGSVLSSFLDFALVPGSEAHSRLSSFVPKGDEHDMEVDTASSATQAAPSKHLPAELEIYCYFIVLLFLIDQKKYNEAKACSSASIARLKNVNRRTIDVIASRLYFYYSLSYEQTGDLAEIRGTLLALHHSATLRHDELGQETLLNLLLRNYLHYNLYDQAEKLRSKAPRFEAHSNQQFCRYLFYLGKIRTIQLEYTDAKESLLQAARKAPIAALGFRIQCNKWAILVRLLLGEIPERSIFTQKGMEKALRPYFELTNAVRIGDLELFRTVQEKFLDTFAQDRTHNLIVRLRHNVIRTGLRNISISYSRISLPDVAKKLRLNSENPVADAESIVAKAIRDGAIDATIDHKNGCMVSKETGDIYSTNEPQTAFNSRIAFCLNMHNEAVRALRFPPNTHKEKESDEKRRERKQQEEELAKHMAEEDDDDF.

One can recognise a PCI domain in the interval 240–421 (CRYLFYLGKI…GCMVSKETGD (182 aa)). The disordered stretch occupies residues 451–488 (RFPPNTHKEKESDEKRRERKQQEEELAKHMAEEDDDDF). Residues 456 to 481 (THKEKESDEKRRERKQQEEELAKHMA) are compositionally biased toward basic and acidic residues.

It belongs to the proteasome subunit S3 family. As to quaternary structure, component of the 19S regulatory particle (RP/PA700) lid subcomplex of the 26S proteasome. The 26S proteasome is composed of a core protease (CP), known as the 20S proteasome, capped at one or both ends by the 19S regulatory particle (RP/PA700). The RP/PA700 complex is composed of at least 17 different subunits in two subcomplexes, the base and the lid, which form the portions proximal and distal to the 20S proteolytic core, respectively. Interacts with UCH1 and UCH2. As to expression, ubiquitous with highest expression in flowers.

In terms of biological role, acts as a regulatory subunit of the 26 proteasome which is involved in the ATP-dependent degradation of ubiquitinated proteins. The polypeptide is 26S proteasome non-ATPase regulatory subunit 3 homolog A (Arabidopsis thaliana (Mouse-ear cress)).